Reading from the N-terminus, the 290-residue chain is Pantothenate synthetase (290 aa).

ATP is bound at residue 30–37; sequence MGALHEGH. Residue histidine 37 is the Proton donor of the active site. Glutamine 61 provides a ligand contact to (R)-pantoate. Residue glutamine 61 coordinates beta-alanine. 147 to 150 lines the ATP pocket; sequence GEKD. Position 153 (glutamine 153) interacts with (R)-pantoate. ATP-binding positions include valine 176 and 184-187; that span reads KSSR.

The protein belongs to the pantothenate synthetase family. In terms of assembly, homodimer.

It localises to the cytoplasm. The catalysed reaction is (R)-pantoate + beta-alanine + ATP = (R)-pantothenate + AMP + diphosphate + H(+). It participates in cofactor biosynthesis; (R)-pantothenate biosynthesis; (R)-pantothenate from (R)-pantoate and beta-alanine: step 1/1. Catalyzes the condensation of pantoate with beta-alanine in an ATP-dependent reaction via a pantoyl-adenylate intermediate. In Chlorobium chlorochromatii (strain CaD3), this protein is Pantothenate synthetase.